We begin with the raw amino-acid sequence, 141 residues long: Hemoglobin subunit alpha (141 aa).

Positions 1-141 (VLSAEDKANV…VSTVLTSKYR (141 aa)) constitute a Globin domain. Position 3 is a phosphoserine (Ser-3). Residues Lys-7 and Lys-11 each carry the N6-succinyllysine modification. Lys-16 carries the post-translational modification N6-acetyllysine; alternate. Lys-16 carries the post-translational modification N6-succinyllysine; alternate. Tyr-24 carries the post-translational modification Phosphotyrosine. Ser-35 is modified (phosphoserine). The residue at position 40 (Lys-40) is an N6-succinyllysine. Ser-49 carries the post-translational modification Phosphoserine. His-58 serves as a coordination point for O2. A heme b-binding site is contributed by His-87. A Phosphoserine modification is found at Ser-102. Thr-108 is modified (phosphothreonine). Ser-124 and Ser-131 each carry phosphoserine. Phosphothreonine is present on residues Thr-134 and Thr-137. Ser-138 is modified (phosphoserine).

Belongs to the globin family. As to quaternary structure, heterotetramer of two alpha chains and two beta chains. Red blood cells.

Its function is as follows. Involved in oxygen transport from the lung to the various peripheral tissues. The polypeptide is Hemoglobin subunit alpha (Peromyscus crinitus (Canyon mouse)).